The following is a 290-amino-acid chain: Alpha-1,2-colitosyltransferase (290 aa).

This sequence belongs to the glycosyltransferase 11 family. Requires Does not require a metal cofactor. as cofactor.

The enzyme catalyses GDP-beta-L-colitose + beta-D-galactosyl-(1-&gt;3)-N-acetyl-D-glucosamine = alpha-L-colitosyl-(1-&gt;2)-beta-D-galactosyl-(1-&gt;3)-N-acetyl-D-glucosamine + GDP + H(+). Its pathway is bacterial outer membrane biogenesis; LPS O-antigen biosynthesis. With respect to regulation, addition of metal ions dramatically decreases the activity to 0-40%. Its function is as follows. Involved in the biosynthesis of the lipopolysaccharide (LPS) O-antigen region. Catalyzes the transfer of colitose from GDP-colitose to the galactose residue of beta-Gal-(1-&gt;3)-GlcNAc (lacto-N-biose) via an alpha1,2-linkage. Is specific for beta-Gal-(1-&gt;3)-GlcNAc, but can use GDP-L-fucose as the sugar donor with almost the same efficiency as GDP-L-colitose. In Escherichia coli, this protein is Alpha-1,2-colitosyltransferase.